The following is a 457-amino-acid chain: Fibrinogen C domain-containing protein 1 (457 aa).

Positions methionine 1–glutamine 20 are disordered. The Cytoplasmic segment spans residues methionine 1–cysteine 33. A helical; Signal-anchor for type II membrane protein membrane pass occupies residues threonine 34–methionine 54. Residues asparagine 55–asparagine 457 are Extracellular-facing. The disordered stretch occupies residues arginine 211–serine 235. Residues cysteine 231–arginine 454 enclose the Fibrinogen C-terminal domain. N-linked (GlcNAc...) asparagine glycosylation occurs at asparagine 233. A disulfide bridge links cysteine 240 with cysteine 269. The N-linked (GlcNAc...) asparagine glycan is linked to asparagine 336. Ca(2+)-binding residues include aspartate 389 and aspartate 391. Cysteines 397 and 410 form a disulfide.

In terms of assembly, homotetramer; disulfide-linked.

It localises to the membrane. Functionally, acetyl group-binding receptor which shows a calcium-dependent binding to acetylated structures such as chitin, some N-acetylated carbohydrates, and amino acids. This is Fibrinogen C domain-containing protein 1 (fibcd1) from Xenopus tropicalis (Western clawed frog).